We begin with the raw amino-acid sequence, 606 residues long: UPF0329 protein ECU06_0090 (606 aa).

The interval 317-401 is disordered; it reads KKEEERREEE…SREACSKERN (85 aa). Over residues 328–353 the composition is skewed to basic and acidic residues; the sequence is EKKRKEEVVQRNVEELLRGEEEEKKG. The span at 354–367 shows a compositional bias: basic residues; it reads AKAKRKSKKKKKGS. Over residues 381–401 the composition is skewed to basic and acidic residues; that stretch reads SENREAQEMEDSREACSKERN.

It belongs to the UPF0329 family.

The chain is UPF0329 protein ECU06_0090 from Encephalitozoon cuniculi (strain GB-M1) (Microsporidian parasite).